We begin with the raw amino-acid sequence, 216 residues long: Ras-related protein YPTC6 (216 aa).

Glycine 19–serine 26 lines the GTP pocket. The Effector region signature appears at serine 41–phenylalanine 49. GTP is bound by residues aspartate 67–glutamine 71 and asparagine 125–aspartate 128. S-geranylgeranyl cysteine attachment occurs at residues cysteine 214 and cysteine 215.

It belongs to the small GTPase superfamily. Rab family.

Its subcellular location is the cell membrane. The sequence is that of Ras-related protein YPTC6 (YPTC6) from Chlamydomonas reinhardtii (Chlamydomonas smithii).